The primary structure comprises 808 residues: Phospholipase D alpha 1 (808 aa).

The propeptide occupies 1-30 (MAQISLHGTLHVTIYEVDKLHSGGGPHFFR). The 125-residue stretch at 1–125 (MAQISLHGTL…LDGEEIDRWV (125 aa)) folds into the C2 domain. Ca(2+) is bound at residue aspartate 186. The PLD phosphodiesterase 1 domain maps to 326-364 (TMFTHHQKIVVVDSAMPNGDSQRRRIVSFVGGLDLCDGR). Residues histidine 331, lysine 333, and aspartate 338 contribute to the active site. Histidine 331 contacts a 1,2-diacyl-sn-glycero-3-phosphate. Residues histidine 370 and histidine 404 each coordinate Ca(2+). A 1,2-diacyl-sn-glycero-3-phosphate contacts are provided by glutamine 520 and histidine 659. The 28-residue stretch at 654 to 681 (FMIYVHTKMMIVDDEYIIIGSANINQRS) folds into the PLD phosphodiesterase 2 domain. Residues histidine 659, lysine 661, and aspartate 666 contribute to the active site. Glutamate 720 contacts Ca(2+).

The protein belongs to the phospholipase D family. C2-PLD subfamily. Ca(2+) serves as cofactor. Expression is higher in radicle than in endosperm.

It is found in the cytoplasm. Its subcellular location is the membrane. The protein resides in the vacuole. The protein localises to the endoplasmic reticulum. It localises to the plastid. It is found in the cell membrane. It catalyses the reaction a 1,2-diacyl-sn-glycero-3-phosphocholine + H2O = a 1,2-diacyl-sn-glycero-3-phosphate + choline + H(+). Functionally, hydrolyzes glycerol-phospholipids at the terminal phosphodiesteric bond. Plays an important role in various cellular processes, including phytohormone action, vesicular trafficking, secretion, cytoskeletal arrangement, meiosis, tumor promotion, pathogenesis, membrane deterioration and senescence. This Ricinus communis (Castor bean) protein is Phospholipase D alpha 1 (PLD1).